Here is a 548-residue protein sequence, read N- to C-terminus: Membrane protein insertase YidC (548 aa).

The chain crosses the membrane as a helical span at residues 6–26 (NLFLIAFLFVSFMIWQAWQTD). The disordered stretch occupies residues 30-53 (QPLQTQTTQNTTSAAGDAVNQGVP). 4 consecutive transmembrane segments (helical) span residues 345–365 (KFLHGFIGNWGFSIIVITFIV), 420–440 (LGGCLPLVIQMPIFLALYYML), 458–478 (LAAQDPYYILPILMGVTMFFI), and 499–519 (PVIFTVFFLWFPSGLVLYYIV).

The protein belongs to the OXA1/ALB3/YidC family. Type 1 subfamily. As to quaternary structure, interacts with the Sec translocase complex via SecD. Specifically interacts with transmembrane segments of nascent integral membrane proteins during membrane integration.

It is found in the cell inner membrane. In terms of biological role, required for the insertion and/or proper folding and/or complex formation of integral membrane proteins into the membrane. Involved in integration of membrane proteins that insert both dependently and independently of the Sec translocase complex, as well as at least some lipoproteins. Aids folding of multispanning membrane proteins. The protein is Membrane protein insertase YidC of Erwinia tasmaniensis (strain DSM 17950 / CFBP 7177 / CIP 109463 / NCPPB 4357 / Et1/99).